We begin with the raw amino-acid sequence, 499 residues long: Anaerobic nitric oxide reductase flavorubredoxin (499 aa).

The tract at residues 30–210 (TKGTSYNSYL…PFSALVTAKI (181 aa)) is zinc metallo-hydrolase. Fe cation is bound by residues His-79, Glu-81, Asp-83, His-147, Asp-166, and His-227. The Flavodoxin-like domain maps to 254–393 (ITLFYDSMSN…LCREHGQFIA (140 aa)). FMN-binding positions include 260–264 (SMSNN) and 342–369 (AFGS…ETAV). Residues 447-498 (KQCMLCTVCNWVYDPEIGEPNQGVEPNTAWIDVPDYFLCPECNLGKDVFVEV) enclose the Rubredoxin-like domain. The Fe cation site is built by Cys-452, Cys-455, Cys-485, and Cys-488.

The protein in the N-terminal section; belongs to the zinc metallo-hydrolase group 3 family. In terms of assembly, homotetramer. The cofactor is Fe cation. FMN is required as a cofactor.

The protein localises to the cytoplasm. The protein operates within nitrogen metabolism; nitric oxide reduction. Anaerobic nitric oxide reductase; uses NADH to detoxify nitric oxide (NO), protecting several 4Fe-4S NO-sensitive enzymes. Has at least 2 reductase partners, only one of which (NorW, flavorubredoxin reductase) has been identified. NO probably binds to the di-iron center; electrons enter from the NorW at rubredoxin and are transferred sequentially to the FMN center and the di-iron center. Also able to function as an aerobic oxygen reductase. The protein is Anaerobic nitric oxide reductase flavorubredoxin of Aliivibrio salmonicida (strain LFI1238) (Vibrio salmonicida (strain LFI1238)).